Reading from the N-terminus, the 330-residue chain is Succinoglycan biosynthesis protein ExoA (330 aa).

The next 3 membrane-spanning stretches (helical) occupy residues Ala-116–Phe-136, Ile-260–Trp-280, and Tyr-299–Trp-319.

It belongs to the glycosyltransferase 2 family.

Its subcellular location is the cell membrane. It participates in glycan metabolism; exopolysaccharide biosynthesis. Functionally, glycosyltransferase required for the synthesis of succinoglycan (EPS I). Needed for the addition of the second sugar (glucose). Catalyzes the formation of a beta-1,3 linkage with the galactose lipid carrier. The protein is Succinoglycan biosynthesis protein ExoA (exoA) of Rhizobium meliloti (strain 1021) (Ensifer meliloti).